Reading from the N-terminus, the 407-residue chain is Ornithine cyclodeaminase (407 aa).

NAD(+)-binding residues include N233, A234, D312, T344, M345, L346, H347, D365, D388, and V389.

It belongs to the AgrE/ArgZ ornithine cyclodeaminase family. NAD(+) is required as a cofactor.

It catalyses the reaction L-ornithine = L-proline + NH4(+). In terms of biological role, catalyzes the conversion of ornithine to proline, with the release of ammonia. This is Ornithine cyclodeaminase from Archaeoglobus fulgidus (strain ATCC 49558 / DSM 4304 / JCM 9628 / NBRC 100126 / VC-16).